The sequence spans 1032 residues: Beta-galactosidase (1032 aa).

Positions 100 and 198 each coordinate substrate. D198 is a Na(+) binding site. Residues E413, H415, and E458 each contribute to the Mg(2+) site. Substrate contacts are provided by residues E458 and 534 to 537 (EYAH). The Proton donor role is filled by E458. E534 (nucleophile) is an active-site residue. N594 provides a ligand contact to Mg(2+). Residues F598 and N601 each coordinate Na(+). The substrate site is built by N601 and W1006.

The protein belongs to the glycosyl hydrolase 2 family. Homotetramer. Requires Mg(2+) as cofactor. The cofactor is Na(+).

The enzyme catalyses Hydrolysis of terminal non-reducing beta-D-galactose residues in beta-D-galactosides.. The sequence is that of Beta-galactosidase from Vibrio vulnificus (strain CMCP6).